The chain runs to 247 residues: ATP synthase subunit a, chloroplastic (247 aa).

Transmembrane regions (helical) follow at residues 38–58 (QVLI…AIAV), 95–115 (VPFI…GALL), 134–154 (INTT…AGLT), 199–219 (LVVV…VMFL), and 220–240 (GLFT…AYIG).

Belongs to the ATPase A chain family. In terms of assembly, F-type ATPases have 2 components, CF(1) - the catalytic core - and CF(0) - the membrane proton channel. CF(1) has five subunits: alpha(3), beta(3), gamma(1), delta(1), epsilon(1). CF(0) has four main subunits: a, b, b' and c.

The protein localises to the plastid. It localises to the chloroplast thylakoid membrane. Its function is as follows. Key component of the proton channel; it plays a direct role in the translocation of protons across the membrane. The polypeptide is ATP synthase subunit a, chloroplastic (atpI) (Spinacia oleracea (Spinach)).